An 82-amino-acid polypeptide reads, in one-letter code: ATP synthase subunit c, chloroplastic (82 aa).

2 helical membrane passes run 3–23 and 57–77; these read PLICAASVVGAGLAIGLGAIG and LAFMEALTIYGLVVALALMFA.

Belongs to the ATPase C chain family. In terms of assembly, F-type ATPases have 2 components, F(1) - the catalytic core - and F(0) - the membrane proton channel. F(1) has five subunits: alpha(3), beta(3), gamma(1), delta(1), epsilon(1). F(0) has four main subunits: a(1), b(1), b'(1) and c(10-14). The alpha and beta chains form an alternating ring which encloses part of the gamma chain. F(1) is attached to F(0) by a central stalk formed by the gamma and epsilon chains, while a peripheral stalk is formed by the delta, b and b' chains.

It localises to the plastid. Its subcellular location is the chloroplast thylakoid membrane. In terms of biological role, f(1)F(0) ATP synthase produces ATP from ADP in the presence of a proton or sodium gradient. F-type ATPases consist of two structural domains, F(1) containing the extramembraneous catalytic core and F(0) containing the membrane proton channel, linked together by a central stalk and a peripheral stalk. During catalysis, ATP synthesis in the catalytic domain of F(1) is coupled via a rotary mechanism of the central stalk subunits to proton translocation. Functionally, key component of the F(0) channel; it plays a direct role in translocation across the membrane. A homomeric c-ring of between 10-14 subunits forms the central stalk rotor element with the F(1) delta and epsilon subunits. In Ostreococcus tauri, this protein is ATP synthase subunit c, chloroplastic.